The following is a 251-amino-acid chain: Probable ATP-dependent transporter ycf16 (251 aa).

Residues 8–250 (LEIKNLKACI…ELESKGYEWL (243 aa)) form the ABC transporter domain. ATP is bound at residue 40-47 (GPNGSGKS).

It belongs to the ABC transporter superfamily. Ycf16 family.

It is found in the plastid. The protein resides in the chloroplast. The protein is Probable ATP-dependent transporter ycf16 (ycf16) of Trieres chinensis (Marine centric diatom).